Reading from the N-terminus, the 309-residue chain is Taste receptor type 2 member 64 (309 aa).

Over 1–3 (MVY) the chain is Extracellular. A helical transmembrane segment spans residues 4 to 26 (FLLIILSILVVFAFVLGNFSNGF). At 27 to 46 (VALVNVIDWVKTRKISSADQ) the chain is on the cytoplasmic side. The helical transmembrane segment at 47–69 (ILTALVVSRIGLLWVILFHWYAN) threads the bilayer. The Extracellular portion of the chain corresponds to 70–83 (VFNSALYSSEVGAV). The helical transmembrane segment at 84-106 (ASNISAIINHFSIWLAASLGIFY) threads the bilayer. The Cytoplasmic segment spans residues 107-126 (LLKIANFSNLIFLHLKKRIR). Residues 127–149 (SVVLVILLGPLVFLICNLAVITM) form a helical membrane-spanning segment. Topologically, residues 150-176 (DERVWTKEYEGNVTWKIKLRNAIHLSD) are extracellular. The N-linked (GlcNAc...) asparagine glycan is linked to Asn-161. Residues 177-199 (LTVSTLANLIPFILTLICFLLLI) traverse the membrane as a helical segment. The Cytoplasmic segment spans residues 200 to 230 (CSLHKHLKKMQLHGKGSQDLSTKVHIKALQT). The helical transmembrane segment at 231-253 (VISFLMLYAIYFLYLITLTWNLW) threads the bilayer. Topologically, residues 254-258 (TQQNK) are extracellular. A helical transmembrane segment spans residues 259–281 (LVFLLCQTLGIMYPSFHSFFLIM). Topologically, residues 282–309 (GSRKLKQTFLSVLCQVTCLVKGQQPSTP) are cytoplasmic.

The protein belongs to the G-protein coupled receptor T2R family.

The protein resides in the membrane. Receptor that may play a role in the perception of bitterness and is gustducin-linked. May play a role in sensing the chemical composition of the gastrointestinal content. The activity of this receptor may stimulate alpha gustducin, mediate PLC-beta-2 activation and lead to the gating of TRPM5. This is Taste receptor type 2 member 64 (TAS2R64) from Pan paniscus (Pygmy chimpanzee).